The following is a 314-amino-acid chain: Carbamate kinase (314 aa).

Belongs to the carbamate kinase family. As to quaternary structure, homodimer.

It localises to the cytoplasm. It catalyses the reaction hydrogencarbonate + NH4(+) + ATP = carbamoyl phosphate + ADP + H2O + H(+). In terms of biological role, carbamate kinase that plays a biosynthetic role in that it produces carbamoyl-phosphate. In Pyrococcus furiosus (strain ATCC 43587 / DSM 3638 / JCM 8422 / Vc1), this protein is Carbamate kinase (cpkA).